Consider the following 361-residue polypeptide: Beta-hexosaminidase (361 aa).

Substrate-binding positions include aspartate 69, arginine 77, arginine 144, and 174-175 (KH). Histidine 187 functions as the Proton donor/acceptor in the catalytic mechanism. Residue aspartate 258 is the Nucleophile of the active site.

The protein belongs to the glycosyl hydrolase 3 family. NagZ subfamily.

The protein localises to the cytoplasm. The catalysed reaction is Hydrolysis of terminal non-reducing N-acetyl-D-hexosamine residues in N-acetyl-beta-D-hexosaminides.. It functions in the pathway cell wall biogenesis; peptidoglycan recycling. Functionally, plays a role in peptidoglycan recycling by cleaving the terminal beta-1,4-linked N-acetylglucosamine (GlcNAc) from peptide-linked peptidoglycan fragments, giving rise to free GlcNAc, anhydro-N-acetylmuramic acid and anhydro-N-acetylmuramic acid-linked peptides. The sequence is that of Beta-hexosaminidase from Neisseria meningitidis serogroup C / serotype 2a (strain ATCC 700532 / DSM 15464 / FAM18).